Reading from the N-terminus, the 87-residue chain is Small ribosomal subunit protein uS12m (87 aa).

It belongs to the universal ribosomal protein uS12 family.

The protein resides in the mitochondrion matrix. Its subcellular location is the kinetoplast. Functionally, protein S12 is involved in the translation initiation step. The protein is Small ribosomal subunit protein uS12m (RPS12) of Trypanoplasma borreli.